Consider the following 677-residue polypeptide: DNA ligase (677 aa).

NAD(+)-binding positions include 34-38 (DAEYD), 83-84 (SL), and glutamate 117. Catalysis depends on lysine 119, which acts as the N6-AMP-lysine intermediate. The NAD(+) site is built by arginine 140, glutamate 175, lysine 283, and lysine 307. 4 residues coordinate Zn(2+): cysteine 401, cysteine 404, cysteine 419, and cysteine 425. Residues 594 to 677 (SHLSLLHGKT…QYISPNTNEN (84 aa)) enclose the BRCT domain.

Belongs to the NAD-dependent DNA ligase family. LigA subfamily. It depends on Mg(2+) as a cofactor. Mn(2+) is required as a cofactor.

The enzyme catalyses NAD(+) + (deoxyribonucleotide)n-3'-hydroxyl + 5'-phospho-(deoxyribonucleotide)m = (deoxyribonucleotide)n+m + AMP + beta-nicotinamide D-nucleotide.. In terms of biological role, DNA ligase that catalyzes the formation of phosphodiester linkages between 5'-phosphoryl and 3'-hydroxyl groups in double-stranded DNA using NAD as a coenzyme and as the energy source for the reaction. It is essential for DNA replication and repair of damaged DNA. This is DNA ligase from Ehrlichia canis (strain Jake).